Here is a 335-residue protein sequence, read N- to C-terminus: Corrinoid adenosyltransferase PduO (335 aa).

His206 serves as a coordination point for heme.

It belongs to the Cob(I)alamin adenosyltransferase family. PduO subfamily. Forms a complex with PduS. Requires heme b as cofactor. It depends on Mg(2+) as a cofactor.

It localises to the bacterial microcompartment. It carries out the reaction cob(I)alamin-[corrinoid adenosyltransferase] + ATP = apo-[corrinoid adenosyltransferase] + adenosylcob(III)alamin + triphosphate. It participates in polyol metabolism; 1,2-propanediol degradation. The protein operates within cofactor biosynthesis; adenosylcobalamin biosynthesis. Its function is as follows. Converts cob(I)alamin to adenosylcobalamin (adenosylcob(III)alamin), the cofactor for propanediol dehydratase. Found in the bacterial microcompartment (BMC) dedicated to 1,2-propanediol (1,2-PD) degradation. PduS and PduO allow regeneration of the adenosylcobalamin cofactor within the BMC. Functionally, expression of a cosmid containing the full 21-gene pdu operon in E.coli allows E.coli to grow on 1,2-propanediol (1,2-PD) with the appearance of bacterial microcompartments (BMC) in its cytoplasm. In terms of biological role, the 1,2-PD-specific bacterial microcompartment (BMC) concentrates low levels of 1,2-PD catabolic enzymes, concentrates volatile reaction intermediates thus enhancing pathway flux and keeps the level of toxic, mutagenic propionaldehyde low. This Citrobacter freundii protein is Corrinoid adenosyltransferase PduO.